The chain runs to 264 residues: Thymidylate synthase (264 aa).

Arginine 21 provides a ligand contact to dUMP. Histidine 51 lines the (6R)-5,10-methylene-5,6,7,8-tetrahydrofolate pocket. 126 to 127 (RR) provides a ligand contact to dUMP. Cysteine 146 functions as the Nucleophile in the catalytic mechanism. Residues 166–169 (RSVD), asparagine 177, and 207–209 (HLY) each bind dUMP. Position 169 (aspartate 169) interacts with (6R)-5,10-methylene-5,6,7,8-tetrahydrofolate. Alanine 263 contacts (6R)-5,10-methylene-5,6,7,8-tetrahydrofolate.

The protein belongs to the thymidylate synthase family. Bacterial-type ThyA subfamily. Homodimer.

It localises to the cytoplasm. The enzyme catalyses dUMP + (6R)-5,10-methylene-5,6,7,8-tetrahydrofolate = 7,8-dihydrofolate + dTMP. It functions in the pathway pyrimidine metabolism; dTTP biosynthesis. Functionally, catalyzes the reductive methylation of 2'-deoxyuridine-5'-monophosphate (dUMP) to 2'-deoxythymidine-5'-monophosphate (dTMP) while utilizing 5,10-methylenetetrahydrofolate (mTHF) as the methyl donor and reductant in the reaction, yielding dihydrofolate (DHF) as a by-product. This enzymatic reaction provides an intracellular de novo source of dTMP, an essential precursor for DNA biosynthesis. The polypeptide is Thymidylate synthase (Geobacillus kaustophilus (strain HTA426)).